The following is a 585-amino-acid chain: ATP-dependent lipid A-core flippase (585 aa).

The next 6 helical transmembrane spans lie at 18-38 (LWPTIAPFKIGLIAAAAALVL), 68-88 (LMAVLVIVFIFIRGITSFISS), 142-162 (SNALVTIVREGAYIISLLAVM), 163-183 (IATSWQLSVVLFIIGPVIAVL), 255-275 (PIVQIIASLALSAVLYLATIP), and 277-297 (IMSQNLSAGSFTVVFSSMLAM). One can recognise an ABC transmembrane type-1 domain in the interval 30 to 313 (IAAAAALVLN…LTNVNSQFQR (284 aa)). The 237-residue stretch at 345–581 (VSFKDVSFTY…NGAYKQLHKM (237 aa)) folds into the ABC transporter domain. 379–386 (GRSGSGKS) serves as a coordination point for ATP.

This sequence belongs to the ABC transporter superfamily. Lipid exporter (TC 3.A.1.106) family. As to quaternary structure, homodimer.

It localises to the cell inner membrane. It carries out the reaction ATP + H2O + lipid A-core oligosaccharideSide 1 = ADP + phosphate + lipid A-core oligosaccharideSide 2.. Involved in lipopolysaccharide (LPS) biosynthesis. Translocates lipid A-core from the inner to the outer leaflet of the inner membrane. Transmembrane domains (TMD) form a pore in the inner membrane and the ATP-binding domain (NBD) is responsible for energy generation. In Mannheimia succiniciproducens (strain KCTC 0769BP / MBEL55E), this protein is ATP-dependent lipid A-core flippase.